The sequence spans 187 residues: MATTLTLSEAVTALQQGGVIAYPTEAVWGLGCDPRQETAVHTLLNIKQRASGKGLILVTAELNTLQDWLDLDTLSPERLHEVQTSWPGPHTWVLPASTRAPHWITGHHNGLAVRISAHPLVSALCRAWNMALISTSANVAGQPPARRREDLDPSLLPHLAGIVDGPTGGLAQPTSIRDARSGHILRL.

A YrdC-like domain is found at threonine 4–leucine 187.

The protein belongs to the SUA5 family. TsaC subfamily.

It is found in the cytoplasm. It carries out the reaction L-threonine + hydrogencarbonate + ATP = L-threonylcarbamoyladenylate + diphosphate + H2O. Required for the formation of a threonylcarbamoyl group on adenosine at position 37 (t(6)A37) in tRNAs that read codons beginning with adenine. Catalyzes the conversion of L-threonine, HCO(3)(-)/CO(2) and ATP to give threonylcarbamoyl-AMP (TC-AMP) as the acyladenylate intermediate, with the release of diphosphate. This chain is Threonylcarbamoyl-AMP synthase, found in Xylella fastidiosa (strain 9a5c).